The chain runs to 387 residues: Phosphoglycerate kinase (387 aa).

Substrate-binding positions include 21 to 23 (DLN), R36, 59 to 62 (HLGR), R113, and R146. ATP contacts are provided by residues K197, E314, and 340–343 (GGDT).

Belongs to the phosphoglycerate kinase family. Monomer.

Its subcellular location is the cytoplasm. It carries out the reaction (2R)-3-phosphoglycerate + ATP = (2R)-3-phospho-glyceroyl phosphate + ADP. Its pathway is carbohydrate degradation; glycolysis; pyruvate from D-glyceraldehyde 3-phosphate: step 2/5. The sequence is that of Phosphoglycerate kinase from Sodalis glossinidius (strain morsitans).